Consider the following 130-residue polypeptide: Small ribosomal subunit protein uS9 (130 aa).

It belongs to the universal ribosomal protein uS9 family.

The protein is Small ribosomal subunit protein uS9 of Clostridium beijerinckii (strain ATCC 51743 / NCIMB 8052) (Clostridium acetobutylicum).